A 333-amino-acid chain; its full sequence is MIKVGINGFGRIGRMVFRAAVKNFGNDIQIVGINDLLDAEYLAYMLKYDSVHGRFEGEVAVEDGALIVNGNKIRLTAEMDPANLKWNEVDADVVVESTGFFLTDETARKHIQAGAKKVIMSAPSKDSTPMFVYGVNHTSYAGQDIISNASCTTNCLAPIAKVLNDKFGIVKGLMTTVHAATATQKTVDGPSKKDWRGGRGILENIIPSSTGAAKAVGKVLPVLNGKLTGMAFRVPTSDVSVVDLTVVLEKAATMAEINAAMKEASEGELKGILGYTEDAVVSTDFRGCANTSIYDSKAGISLDSNFAKVVSWYDNEWGYSNKVCEMARVIAAK.

Residues 11–12 (RI), Asp35, Met79, and Ser121 contribute to the NAD(+) site. Residues 150–152 (SCT), Thr181, 210–211 (TG), and Arg233 each bind D-glyceraldehyde 3-phosphate. The active-site Nucleophile is Cys151. Asn315 provides a ligand contact to NAD(+).

This sequence belongs to the glyceraldehyde-3-phosphate dehydrogenase family. In terms of assembly, homotetramer.

It is found in the cytoplasm. It carries out the reaction D-glyceraldehyde 3-phosphate + phosphate + NAD(+) = (2R)-3-phospho-glyceroyl phosphate + NADH + H(+). It participates in carbohydrate degradation; glycolysis; pyruvate from D-glyceraldehyde 3-phosphate: step 1/5. In terms of biological role, catalyzes the oxidative phosphorylation of glyceraldehyde 3-phosphate (G3P) to 1,3-bisphosphoglycerate (BPG) using the cofactor NAD. The first reaction step involves the formation of a hemiacetal intermediate between G3P and a cysteine residue, and this hemiacetal intermediate is then oxidized to a thioester, with concomitant reduction of NAD to NADH. The reduced NADH is then exchanged with the second NAD, and the thioester is attacked by a nucleophilic inorganic phosphate to produce BPG. The polypeptide is Glyceraldehyde-3-phosphate dehydrogenase (gap) (Bacteroides fragilis (strain YCH46)).